We begin with the raw amino-acid sequence, 698 residues long: Polyribonucleotide nucleotidyltransferase (698 aa).

Mg(2+)-binding residues include D490 and D496. Positions 557–616 (PKVVTMTIKPDKIRDVIGPGGKKINEIIDETGVKLDIEQDGTIFIGAVDQAMINRAREII) constitute a KH domain. Residues 626-694 (GQTYQATVKR…KQGRVNASHR (69 aa)) enclose the S1 motif domain.

This sequence belongs to the polyribonucleotide nucleotidyltransferase family. Requires Mg(2+) as cofactor.

It is found in the cytoplasm. The catalysed reaction is RNA(n+1) + phosphate = RNA(n) + a ribonucleoside 5'-diphosphate. Involved in mRNA degradation. Catalyzes the phosphorolysis of single-stranded polyribonucleotides processively in the 3'- to 5'-direction. The chain is Polyribonucleotide nucleotidyltransferase from Staphylococcus aureus (strain bovine RF122 / ET3-1).